We begin with the raw amino-acid sequence, 332 residues long: Holliday junction branch migration complex subunit RuvB (332 aa).

A large ATPase domain (RuvB-L) region spans residues 1–181 (MSRILDNEMM…FGITGHMEYY (181 aa)). Residues Leu-20, Arg-21, Gly-62, Lys-65, Thr-66, Thr-67, 128–130 (EDF), Arg-171, Tyr-181, and Arg-218 each bind ATP. Thr-66 contacts Mg(2+). The small ATPAse domain (RuvB-S) stretch occupies residues 182 to 252 (AHADLTEIVE…ITDKALTMLD (71 aa)). Residues 255–332 (HEGLDYVDQK…EHLGYEYSEK (78 aa)) form a head domain (RuvB-H) region. 4 residues coordinate DNA: Arg-291, Arg-310, Arg-312, and Arg-315.

It belongs to the RuvB family. In terms of assembly, homohexamer. Forms an RuvA(8)-RuvB(12)-Holliday junction (HJ) complex. HJ DNA is sandwiched between 2 RuvA tetramers; dsDNA enters through RuvA and exits via RuvB. An RuvB hexamer assembles on each DNA strand where it exits the tetramer. Each RuvB hexamer is contacted by two RuvA subunits (via domain III) on 2 adjacent RuvB subunits; this complex drives branch migration. In the full resolvosome a probable DNA-RuvA(4)-RuvB(12)-RuvC(2) complex forms which resolves the HJ.

The protein localises to the cytoplasm. It catalyses the reaction ATP + H2O = ADP + phosphate + H(+). The RuvA-RuvB-RuvC complex processes Holliday junction (HJ) DNA during genetic recombination and DNA repair, while the RuvA-RuvB complex plays an important role in the rescue of blocked DNA replication forks via replication fork reversal (RFR). RuvA specifically binds to HJ cruciform DNA, conferring on it an open structure. The RuvB hexamer acts as an ATP-dependent pump, pulling dsDNA into and through the RuvAB complex. RuvB forms 2 homohexamers on either side of HJ DNA bound by 1 or 2 RuvA tetramers; 4 subunits per hexamer contact DNA at a time. Coordinated motions by a converter formed by DNA-disengaged RuvB subunits stimulates ATP hydrolysis and nucleotide exchange. Immobilization of the converter enables RuvB to convert the ATP-contained energy into a lever motion, pulling 2 nucleotides of DNA out of the RuvA tetramer per ATP hydrolyzed, thus driving DNA branch migration. The RuvB motors rotate together with the DNA substrate, which together with the progressing nucleotide cycle form the mechanistic basis for DNA recombination by continuous HJ branch migration. Branch migration allows RuvC to scan DNA until it finds its consensus sequence, where it cleaves and resolves cruciform DNA. This Streptococcus pneumoniae serotype 19F (strain G54) protein is Holliday junction branch migration complex subunit RuvB.